Here is a 108-residue protein sequence, read N- to C-terminus: Small proline-rich protein 5 (108 aa).

Residues 1–13 (MSQQKQKQCAPPQ) show a composition bias toward low complexity. Disordered stretches follow at residues 1–24 (MSQQKQKQCAPPQQCCPPPQQRCP) and 73–108 (PPPQQTKQPCQPPPKCQEPCAPKCPPPQQCQTSKQK). Pro residues-rich tracts occupy residues 14-24 (QCCPPPQQRCP) and 73-100 (PPPQQTKQPCQPPPKCQEPCAPKCPPPQ).

Its function is as follows. Positively regulates keratinocyte differentiation by inducing genes associated with epidermal differentiation. The protein is Small proline-rich protein 5 of Homo sapiens (Human).